The sequence spans 210 residues: Thymidylate kinase (210 aa).

Residue 10 to 17 (GPEGAGKS) participates in ATP binding.

The protein belongs to the thymidylate kinase family.

The catalysed reaction is dTMP + ATP = dTDP + ADP. Its function is as follows. Phosphorylation of dTMP to form dTDP in both de novo and salvage pathways of dTTP synthesis. This is Thymidylate kinase from Pseudomonas putida (strain ATCC 700007 / DSM 6899 / JCM 31910 / BCRC 17059 / LMG 24140 / F1).